The chain runs to 861 residues: Bifunctional uridylyltransferase/uridylyl-removing enzyme (861 aa).

The uridylyltransferase stretch occupies residues 1–321; that stretch reads MKNDNRIIKN…VYHQKQKIIR (321 aa). The tract at residues 322–678 is uridylyl-removing; that stretch reads LDDEFQLSNR…IMPHHSQGGT (357 aa). In terms of domain architecture, HD spans 440–562; the sequence is VDQHTLFVIR…LPHAKYLDYL (123 aa). ACT domains follow at residues 679–760 and 788–861; these read EVFI…AVSR and QLFL…KSKY.

Belongs to the GlnD family. Requires Mg(2+) as cofactor.

It carries out the reaction [protein-PII]-L-tyrosine + UTP = [protein-PII]-uridylyl-L-tyrosine + diphosphate. The enzyme catalyses [protein-PII]-uridylyl-L-tyrosine + H2O = [protein-PII]-L-tyrosine + UMP + H(+). Uridylyltransferase (UTase) activity is inhibited by glutamine, while glutamine activates uridylyl-removing (UR) activity. Functionally, modifies, by uridylylation and deuridylylation, the PII regulatory proteins (GlnB and homologs), in response to the nitrogen status of the cell that GlnD senses through the glutamine level. Under low glutamine levels, catalyzes the conversion of the PII proteins and UTP to PII-UMP and PPi, while under higher glutamine levels, GlnD hydrolyzes PII-UMP to PII and UMP (deuridylylation). Thus, controls uridylylation state and activity of the PII proteins, and plays an important role in the regulation of nitrogen assimilation and metabolism. The protein is Bifunctional uridylyltransferase/uridylyl-removing enzyme of Legionella pneumophila (strain Lens).